The following is a 151-amino-acid chain: Large ribosomal subunit protein bL9 (151 aa).

The protein belongs to the bacterial ribosomal protein bL9 family.

Its function is as follows. Binds to the 23S rRNA. The protein is Large ribosomal subunit protein bL9 of Mycolicibacterium smegmatis (strain ATCC 700084 / mc(2)155) (Mycobacterium smegmatis).